The following is an 83-amino-acid chain: uncharacterized protein (83 aa).

The protein belongs to the BolA/IbaG family.

This is an uncharacterized protein from Acinetobacter guillouiae (Acinetobacter genomosp. 11).